The primary structure comprises 330 residues: tRNA U34 carboxymethyltransferase (330 aa).

Residues Lys91, Trp105, Lys110, Gly130, Asp152–Ser154, Ile181–Glu182, Met196, Tyr200, and Arg315 each bind carboxy-S-adenosyl-L-methionine.

The protein belongs to the class I-like SAM-binding methyltransferase superfamily. CmoB family. As to quaternary structure, homotetramer.

It carries out the reaction carboxy-S-adenosyl-L-methionine + 5-hydroxyuridine(34) in tRNA = 5-carboxymethoxyuridine(34) in tRNA + S-adenosyl-L-homocysteine + H(+). Functionally, catalyzes carboxymethyl transfer from carboxy-S-adenosyl-L-methionine (Cx-SAM) to 5-hydroxyuridine (ho5U) to form 5-carboxymethoxyuridine (cmo5U) at position 34 in tRNAs. This chain is tRNA U34 carboxymethyltransferase, found in Shewanella pealeana (strain ATCC 700345 / ANG-SQ1).